Consider the following 970-residue polypeptide: Serine/threonine-protein kinase PLK4 (970 aa).

In terms of domain architecture, Protein kinase spans 12-265 (FKVGNLLGKG…LSSVLDHPFM (254 aa)). ATP is bound by residues 18–26 (LGKGSFAGV) and lysine 41. N6-acetyllysine is present on residues lysine 45 and lysine 46. Aspartate 136 acts as the Proton acceptor in catalysis. 2 disordered regions span residues 323 to 458 (TVFP…NHLC) and 497 to 538 (SISP…HSVK). Residues 328 to 356 (NKSSTDFSSSGDGNSFYTQWGNQETSNSG) show a composition bias toward polar residues. Over residues 360–369 (VIQDAEERPH) the composition is skewed to basic and acidic residues. Residues 379–393 (SDRSGTSNSQSQAKT) show a composition bias toward polar residues. A Phosphoserine modification is found at serine 401. Over residues 438–454 (SSSSGSFERPDNNQALS) the composition is skewed to polar residues. A compositionally biased stretch (basic and acidic residues) spans 504 to 515 (FQGHPDLQKDTS). Positions 586–699 (TLRSITSPLV…SRFVQLVRSK (114 aa)) constitute a Cryptic POLO box 1 (CPB1) domain. A Phosphoserine modification is found at serine 665. Positions 700–813 (SPKITYFTRY…GRKPGSTSSP (114 aa)) constitute a Cryptic POLO box 2 (CPB2) domain. Positions 808–828 (GSTSSPKALSPPPSVDSNYPT) are disordered. Phosphoserine is present on serine 817. Residues 886 to 964 (QLLKSVFVKN…LSSILLMFSN (79 aa)) form the POLO box domain.

This sequence belongs to the protein kinase superfamily. Ser/Thr protein kinase family. CDC5/Polo subfamily. As to quaternary structure, homodimer. Interacts with CEP152 (via N-terminus). Interacts with CEP78; this interaction may be important for proper PLK4 localization to the centriole and PLK4-induced overduplication of centrioles. Interacts with CEP131. Interacts simultaneously with TENT5C and CEP192. Interacts with TENT5C; this interaction leads to the TENT5C recruitment in the centrosome. Interacts with CEP85; this interaction may be important in cell migration and centriole assembly. Post-translationally, acetylation by KAT2A and KAT2B impairs kinase activity by shifting the kinase to an inactive conformation. Ubiquitinated; leading to its degradation by the proteasome. Deubiquitinated by USP54; leading to PLK4 stabilization. In terms of processing, tyrosine-phosphorylated by TEC.

It is found in the cytoplasm. It localises to the cytoskeleton. Its subcellular location is the microtubule organizing center. The protein localises to the centrosome. The protein resides in the centriole. It is found in the nucleus. It localises to the nucleolus. Its subcellular location is the cleavage furrow. It catalyses the reaction L-seryl-[protein] + ATP = O-phospho-L-seryl-[protein] + ADP + H(+). The enzyme catalyses L-threonyl-[protein] + ATP = O-phospho-L-threonyl-[protein] + ADP + H(+). Its function is as follows. Serine/threonine-protein kinase that plays a central role in centriole duplication. Able to trigger procentriole formation on the surface of the parental centriole cylinder, leading to the recruitment of centriole biogenesis proteins such as SASS6, CPAP, CCP110, CEP135 and gamma-tubulin. When overexpressed, it is able to induce centrosome amplification through the simultaneous generation of multiple procentrioles adjoining each parental centriole during S phase. Phosphorylates 'Ser-151' of FBXW5 during the G1/S transition, leading to inhibit FBXW5 ability to ubiquitinate SASS6. Its central role in centriole replication suggests a possible role in tumorigenesis, centrosome aberrations being frequently observed in tumors. Also involved in deuterosome-mediated centriole amplification in multiciliated that can generate more than 100 centrioles. Also involved in trophoblast differentiation by phosphorylating HAND1, leading to disrupt the interaction between HAND1 and MDFIC and activate HAND1. Phosphorylates CDC25C and CHEK2. Required for the recruitment of STIL to the centriole and for STIL-mediated centriole amplification. Phosphorylates CEP131 at 'Ser-78' and PCM1 at 'Ser-372' which is essential for proper organization and integrity of centriolar satellites. This is Serine/threonine-protein kinase PLK4 from Homo sapiens (Human).